Here is a 204-residue protein sequence, read N- to C-terminus: Ras-related protein RABG1 (204 aa).

GTP is bound at residue 12-19 (GDSGVGKT). Positions 34–42 (HNSTIYVDL) match the Effector region motif. GTP is bound by residues 60–64 (DTAGQ), 122–125 (NKTD), and 155–156 (SA). Residues Cys-202 and Cys-204 are each lipidated (S-geranylgeranyl cysteine). Position 204 is a cysteine methyl ester (Cys-204).

This sequence belongs to the small GTPase superfamily. Rab family.

It is found in the cell membrane. Intracellular vesicle trafficking and protein transport. The protein is Ras-related protein RABG1 (RABG1) of Arabidopsis thaliana (Mouse-ear cress).